A 274-amino-acid chain; its full sequence is Large ribosomal subunit protein uL2cz/uL2cy (274 aa).

Disordered stretches follow at residues 1–23 and 223–274; these read MAIH…SQVK and MNPV…RRSK. Over residues 7–23 the composition is skewed to polar residues; the sequence is KTSTPSTRNGTVGSQVK.

The protein belongs to the universal ribosomal protein uL2 family. As to quaternary structure, part of the 50S ribosomal subunit.

It is found in the plastid. It localises to the chloroplast. The sequence is that of Large ribosomal subunit protein uL2cz/uL2cy (rpl2-A) from Nandina domestica (Heavenly bamboo).